The sequence spans 224 residues: MANSGLQLLGYFLALGGWVGIIASTALPQWKQSSYAGDAIITAVGLYEGLWMSCASQSTGQVQCKLYDSLLALDGHIQSARALMVVAVLLGFVAMVLSVVGMKCTRVGDSNPTAKGRVAISGGALFLLAGLCTLTAVSWYATLVTQEFFNPSTPVNARYEFGPALFVGWASAGLAILGGSFLCCTCPEPERANSIPQPYRSGPSTAAREPVVKLSTSVKGPLGV.

Topologically, residues 1-7 (MANSGLQ) are cytoplasmic. The chain crosses the membrane as a helical span at residues 8-28 (LLGYFLALGGWVGIIASTALP). The Extracellular portion of the chain corresponds to 29 to 81 (QWKQSSYAGDAIITAVGLYEGLWMSCASQSTGQVQCKLYDSLLALDGHIQSAR). A disulfide bridge connects residues Cys54 and Cys64. Residues 82–102 (ALMVVAVLLGFVAMVLSVVGM) traverse the membrane as a helical segment. Topologically, residues 103-117 (KCTRVGDSNPTAKGR) are cytoplasmic. A helical membrane pass occupies residues 118–138 (VAISGGALFLLAGLCTLTAVS). The Extracellular segment spans residues 139–160 (WYATLVTQEFFNPSTPVNARYE). A helical membrane pass occupies residues 161 to 181 (FGPALFVGWASAGLAILGGSF). Residues 182–224 (LCCTCPEPERANSIPQPYRSGPSTAAREPVVKLSTSVKGPLGV) lie on the Cytoplasmic side of the membrane.

It belongs to the claudin family. As to quaternary structure, can form homo- and heteropolymeric tight junction strands. Interacts with other claudins including CLDN3, CLDN10, CLDN16 and CLDN18 with highest affinity for CLDN16. Interacts (via PDZ-binding motif TRV) with TJP1 (via PDZ domain).

It is found in the cell junction. The protein localises to the tight junction. The protein resides in the cell membrane. The enzyme catalyses Mg(2+)(in) = Mg(2+)(out). It catalyses the reaction Ca(2+)(in) = Ca(2+)(out). The catalysed reaction is Na(+)(in) = Na(+)(out). It carries out the reaction K(+)(in) = K(+)(out). The enzyme catalyses Rb(+)(in) = Rb(+)(out). It catalyses the reaction Cs(+)(in) = Cs(+)(out). The catalysed reaction is Li(+)(in) = Li(+)(out). Forms paracellular channels: coassembles with CLDN16 into tight junction strands with cation-selective channels through the strands, conveying epithelial permeability in a process known as paracellular tight junction permeability. Involved in the maintenance of ion gradients along the nephron. In the thick ascending limb (TAL) of Henle's loop, facilitates sodium paracellular permeability from the interstitial compartment to the lumen, contributing to the lumen-positive transepithelial potential that drives paracellular magnesium and calcium reabsorption. Forms paracellular barriers on its own. In the peripheral nervous system, represents a major constituent of the tight junctions in Schwann cells and contributes to electrical sealing. During retinal neurogenesis, may regulate the barrier properties of tight junctions in retinal pigment epithelium, required for proper retinal tissue differentiation and vision. The polypeptide is Claudin-19 (Rattus norvegicus (Rat)).